The primary structure comprises 554 residues: Valerianol synthase TPS1E (554 aa).

Residues aspartate 307 and aspartate 311 each contribute to the Mg(2+) site. The short motif at 326–330 (VQRWD) is the DDXXD motif element. The Mg(2+) site is built by aspartate 452, serine 456, and glutamate 460.

The protein belongs to the terpene synthase family. Mg(2+) is required as a cofactor.

The enzyme catalyses (2E,6E)-farnesyl diphosphate + H2O = valerianol + diphosphate. The protein operates within secondary metabolite biosynthesis; terpenoid biosynthesis. Terpene synthase that catalyzes the biosynthesis of the terpene valerianol, which is a volatile compound of floral scent. This Camellia hiemalis (Camellia) protein is Valerianol synthase TPS1E.